The chain runs to 654 residues: Macrolide export ATP-binding/permease protein MacB (654 aa).

In terms of domain architecture, ABC transporter spans Ile6–Ala244. An ATP-binding site is contributed by Gly42–Ser49. 4 consecutive transmembrane segments (helical) span residues Leu279–Gly299, Ile534–Val554, Met584–Phe604, and Val617–Leu637.

This sequence belongs to the ABC transporter superfamily. Macrolide exporter (TC 3.A.1.122) family. In terms of assembly, homodimer. Part of the tripartite efflux system MacAB-TolC, which is composed of an inner membrane transporter, MacB, a periplasmic membrane fusion protein, MacA, and an outer membrane component, TolC. The complex forms a large protein conduit and can translocate molecules across both the inner and outer membranes. Interacts with MacA.

The protein localises to the cell inner membrane. Functionally, part of the tripartite efflux system MacAB-TolC. MacB is a non-canonical ABC transporter that contains transmembrane domains (TMD), which form a pore in the inner membrane, and an ATP-binding domain (NBD), which is responsible for energy generation. Confers resistance against macrolides. The chain is Macrolide export ATP-binding/permease protein MacB from Hahella chejuensis (strain KCTC 2396).